We begin with the raw amino-acid sequence, 335 residues long: Methionine import ATP-binding protein MetN (335 aa).

The ABC transporter domain maps to 2-241 (IQFQRLHKSY…PKHATTRRFV (240 aa)). ATP is bound at residue 38–45 (GHSGAGKS).

Belongs to the ABC transporter superfamily. Methionine importer (TC 3.A.1.24) family. The complex is composed of two ATP-binding proteins (MetN), two transmembrane proteins (MetI) and a solute-binding protein (MetQ).

Its subcellular location is the cell inner membrane. It catalyses the reaction L-methionine(out) + ATP + H2O = L-methionine(in) + ADP + phosphate + H(+). The catalysed reaction is D-methionine(out) + ATP + H2O = D-methionine(in) + ADP + phosphate + H(+). In terms of biological role, part of the ABC transporter complex MetNIQ involved in methionine import. Responsible for energy coupling to the transport system. The polypeptide is Methionine import ATP-binding protein MetN (Xanthomonas axonopodis pv. citri (strain 306)).